Reading from the N-terminus, the 398-residue chain is Glycosyltransferase GlyF (398 aa).

A GT8 domain region spans residues 1–259 (MRKSIVLAAD…SEIAFQRSDL (259 aa)). Residues 8 to 13 (AADNAY) and 101 to 102 (DS) each bind UDP. Residues D101, D103, and H221 each contribute to the Mn(2+) site. 221–227 (HYASHDK) lines the UDP pocket.

This sequence in the N-terminal section; belongs to the glycosyltransferase 8 family.

May be involved in the polymorphic O-glycosylation of the serine-rich repeat protein PsrP. Has hydrolytic activity against UDP-galactose and to a lesser extent against UDP-glucose; no glycosyltransferase activity has been seen with tested substrates. This is Glycosyltransferase GlyF from Streptococcus pneumoniae serotype 4 (strain ATCC BAA-334 / TIGR4).